The following is a 265-amino-acid chain: H-2 class II histocompatibility antigen, A beta chain (265 aa).

The signal sequence occupies residues 1–27; it reads MALQIPSLLLSAAVVVLMVLSSPGTEG. The beta-1 stretch occupies residues 28 to 122; that stretch reads GDSERHFVYQ…PETHTSLRRL (95 aa). At 28 to 226 the chain is on the extracellular side; the sequence is GDSERHFVYQ…RAQSESAWSK (199 aa). 2 disulfide bridges follow: C42–C106 and C145–C201. N-linked (GlcNAc...) asparagine glycosylation is present at N46. The segment at 123–216 is beta-2; sequence EQPNVVISLS…SLKSPITVEW (94 aa). Residues 125-213 form the Ig-like C1-type domain; that stretch reads PNVVISLSRT…EHPSLKSPIT (89 aa). Positions 217 to 226 are connecting peptide; it reads RAQSESAWSK. A helical transmembrane segment spans residues 227-247; that stretch reads MLSGIGGCVLGVIFLGLGLFI. At 248–265 the chain is on the cytoplasmic side; it reads RHRSQKGPRGPPPAGLLQ.

This sequence belongs to the MHC class II family. Post-translationally, ubiquitinated in immature dendritic cells leading to down-regulation of MHC class II.

The protein localises to the membrane. The chain is H-2 class II histocompatibility antigen, A beta chain (H2-Ab1) from Mus musculus (Mouse).